A 347-amino-acid polypeptide reads, in one-letter code: Selenide, water dikinase (347 aa).

Cys17 is a catalytic residue. Residues Lys20 and 48-50 each bind ATP; that span reads TRD. Mg(2+) is bound at residue Asp51. ATP contacts are provided by residues Asp68, Asp91, and 139–141; that span reads GHS. Asp91 is a Mg(2+) binding site. Residue Asp227 participates in Mg(2+) binding.

Belongs to the selenophosphate synthase 1 family. Class I subfamily. Homodimer. Requires Mg(2+) as cofactor.

The enzyme catalyses hydrogenselenide + ATP + H2O = selenophosphate + AMP + phosphate + 2 H(+). Functionally, synthesizes selenophosphate from selenide and ATP. This is Selenide, water dikinase from Shigella flexneri serotype 5b (strain 8401).